The primary structure comprises 525 residues: Membrane-bound lytic murein transglycosylase F (525 aa).

The signal sequence occupies residues 1–24 (MQIRHFNRLKRSVLLFASVLLLSA). Residues 25–284 (CQIESQPKSE…SLEEKYIGHI (260 aa)) are non-LT domain. The segment at 286-525 (AFDYVDTRAF…VDEDLDQEEE (240 aa)) is LT domain. E329 is a catalytic residue. A disordered region spans residues 506-525 (VSGASDITNEVDEDLDQEEE). Acidic residues predominate over residues 514–525 (NEVDEDLDQEEE).

In the N-terminal section; belongs to the bacterial solute-binding protein 3 family. It in the C-terminal section; belongs to the transglycosylase Slt family.

Its subcellular location is the cell outer membrane. It catalyses the reaction Exolytic cleavage of the (1-&gt;4)-beta-glycosidic linkage between N-acetylmuramic acid (MurNAc) and N-acetylglucosamine (GlcNAc) residues in peptidoglycan, from either the reducing or the non-reducing ends of the peptidoglycan chains, with concomitant formation of a 1,6-anhydrobond in the MurNAc residue.. Murein-degrading enzyme that degrades murein glycan strands and insoluble, high-molecular weight murein sacculi, with the concomitant formation of a 1,6-anhydromuramoyl product. Lytic transglycosylases (LTs) play an integral role in the metabolism of the peptidoglycan (PG) sacculus. Their lytic action creates space within the PG sacculus to allow for its expansion as well as for the insertion of various structures such as secretion systems and flagella. This chain is Membrane-bound lytic murein transglycosylase F, found in Vibrio parahaemolyticus serotype O3:K6 (strain RIMD 2210633).